Consider the following 88-residue polypeptide: Small ribosomal subunit protein uS15 (88 aa).

Residues 1–12 are compositionally biased toward basic and acidic residues; the sequence is MITQEEQQKIID. The disordered stretch occupies residues 1–24; the sequence is MITQEEQQKIIDRFGNGPNDTGTP.

It belongs to the universal ribosomal protein uS15 family. As to quaternary structure, part of the 30S ribosomal subunit. Forms a bridge to the 50S subunit in the 70S ribosome, contacting the 23S rRNA.

In terms of biological role, one of the primary rRNA binding proteins, it binds directly to 16S rRNA where it helps nucleate assembly of the platform of the 30S subunit by binding and bridging several RNA helices of the 16S rRNA. Forms an intersubunit bridge (bridge B4) with the 23S rRNA of the 50S subunit in the ribosome. The sequence is that of Small ribosomal subunit protein uS15 from Salinibacter ruber (strain DSM 13855 / M31).